Reading from the N-terminus, the 142-residue chain is Small ribosomal subunit protein bS6 (142 aa).

The segment at 96–142 (VTGQSEMLKAEENRSERRERRERPEHDGSADGDDSDSDSDNSDNADE) is disordered. A compositionally biased stretch (basic and acidic residues) spans 103–124 (LKAEENRSERRERRERPEHDGS). Over residues 125–142 (ADGDDSDSDSDNSDNADE) the composition is skewed to acidic residues.

It belongs to the bacterial ribosomal protein bS6 family.

Functionally, binds together with bS18 to 16S ribosomal RNA. The polypeptide is Small ribosomal subunit protein bS6 (Pseudomonas fluorescens (strain Pf0-1)).